The following is a 272-amino-acid chain: Petrobactin import ATP-binding protein FpuC (272 aa).

In terms of domain architecture, ABC transporter spans 2–238; that stretch reads ISVNKVFYAH…EMFQHIFGIE (237 aa). 34–41 serves as a coordination point for ATP; it reads GPNGSGKS.

Belongs to the ABC transporter superfamily. As to quaternary structure, the complex is composed of two ATP-binding proteins (FpuC), two transmembrane proteins (FpuB) and a solute-binding protein (FpuA).

The protein localises to the cell membrane. The catalysed reaction is a Fe(III)-siderophore(out) + ATP + H2O = a Fe(III)-siderophore(in) + ADP + phosphate + H(+). Its function is as follows. Part of an ABC transporter complex involved in ferric-petrobactin uptake. Probably responsible for energy coupling to the transport system. The protein is Petrobactin import ATP-binding protein FpuC of Bacillus anthracis.